The primary structure comprises 264 residues: 3-methyl-2-oxobutanoate hydroxymethyltransferase (264 aa).

Residues aspartate 45 and aspartate 84 each contribute to the Mg(2+) site. Residues 45-46 (DS), aspartate 84, and lysine 112 contribute to the 3-methyl-2-oxobutanoate site. Glutamate 114 is a binding site for Mg(2+). The active-site Proton acceptor is the glutamate 181.

It belongs to the PanB family. As to quaternary structure, homodecamer; pentamer of dimers. Mg(2+) serves as cofactor.

The protein resides in the cytoplasm. The catalysed reaction is 3-methyl-2-oxobutanoate + (6R)-5,10-methylene-5,6,7,8-tetrahydrofolate + H2O = 2-dehydropantoate + (6S)-5,6,7,8-tetrahydrofolate. Its pathway is cofactor biosynthesis; (R)-pantothenate biosynthesis; (R)-pantoate from 3-methyl-2-oxobutanoate: step 1/2. Catalyzes the reversible reaction in which hydroxymethyl group from 5,10-methylenetetrahydrofolate is transferred onto alpha-ketoisovalerate to form ketopantoate. This Shewanella piezotolerans (strain WP3 / JCM 13877) protein is 3-methyl-2-oxobutanoate hydroxymethyltransferase.